The sequence spans 462 residues: Elongation factor 1-alpha, somatic form (462 aa).

A N,N,N-trimethylglycine modification is found at Gly2. Positions 5 to 242 constitute a tr-type G domain; it reads KTHINIVVIG…DCILPPSRPT (238 aa). Residues 14–21 form a G1 region; it reads GHVDSGKS. A GTP-binding site is contributed by 14–21; sequence GHVDSGKS. Residues 70–74 are G2; the sequence is GITID. The tract at residues 91–94 is G3; the sequence is DAPG. GTP is bound by residues 91 to 95 and 153 to 156; these read DAPGH and NKMD. A G4 region spans residues 153 to 156; it reads NKMD. Positions 194-196 are G5; sequence SGW. A 5-glutamyl glycerylphosphorylethanolamine mark is found at Glu301 and Glu374.

Belongs to the TRAFAC class translation factor GTPase superfamily. Classic translation factor GTPase family. EF-Tu/EF-1A subfamily.

Its subcellular location is the cytoplasm. In terms of biological role, this protein promotes the GTP-dependent binding of aminoacyl-tRNA to the A-site of ribosomes during protein biosynthesis. The sequence is that of Elongation factor 1-alpha, somatic form (eef1as) from Xenopus laevis (African clawed frog).